The sequence spans 197 residues: MLMRTAQVTRNTQETQITVTINLDGQGKAELDSGVPFLDHMLDQIARHGMFDLSVAAKGDLHVDAHHTVEDIGITLGQALNRAVADKKGLVRYGHAYVPLDEALSRVVIDLSGRPGLQFNTTFTRAVIGNFDVDLIQEFFQGFVNHAMVTLHIDNLTGKNAHHQAETIFKAFGRALRMAVTTDPRCDNLIPSTKGVL.

It belongs to the imidazoleglycerol-phosphate dehydratase family.

The protein localises to the cytoplasm. It catalyses the reaction D-erythro-1-(imidazol-4-yl)glycerol 3-phosphate = 3-(imidazol-4-yl)-2-oxopropyl phosphate + H2O. Its pathway is amino-acid biosynthesis; L-histidine biosynthesis; L-histidine from 5-phospho-alpha-D-ribose 1-diphosphate: step 6/9. This Nitrosomonas europaea (strain ATCC 19718 / CIP 103999 / KCTC 2705 / NBRC 14298) protein is Imidazoleglycerol-phosphate dehydratase.